A 182-amino-acid chain; its full sequence is MSFQVRVKQNMQDLDNRLAAFPQLNSLEKNFGVSKLYVFLTAAGIYALFLFLNWGGFLLTNLLAFAMPAFFSINAIETTNKADDTQWLTYYLVTSFLNVIEYWSQLILYYVPVYWLLKAIFLIWLALPKFNGATIIYRHLIRPYITPHVIRICKSVSRQNAAPAPTASSFAHTTATDIPPSI.

The Cytoplasmic segment spans residues 1–34; that stretch reads MSFQVRVKQNMQDLDNRLAAFPQLNSLEKNFGVS. The helical transmembrane segment at 35 to 54 threads the bilayer; the sequence is KLYVFLTAAGIYALFLFLNW. At 55 to 56 the chain is on the lumenal side; that stretch reads GG. The chain crosses the membrane as a helical span at residues 57–75; it reads FLLTNLLAFAMPAFFSINA. The Cytoplasmic segment spans residues 76 to 85; that stretch reads IETTNKADDT. A helical transmembrane segment spans residues 86–102; that stretch reads QWLTYYLVTSFLNVIEY. At 103 to 105 the chain is on the lumenal side; sequence WSQ. Residues 106 to 124 traverse the membrane as a helical segment; it reads LILYYVPVYWLLKAIFLIW. Residues 125–182 are Cytoplasmic-facing; it reads LALPKFNGATIIYRHLIRPYITPHVIRICKSVSRQNAAPAPTASSFAHTTATDIPPSI.

The protein belongs to the DP1 family. In terms of assembly, oligomer. Interacts with RTN1 and TTS1.

It localises to the endoplasmic reticulum membrane. The protein localises to the nucleus membrane. Its function is as follows. Required to generate and maintain the structure of the tubular endoplasmic reticulum network and the vacuole. Induces high curvature in membranes and causes membrane tubule formation. Involved in membrane/vesicle trafficking. Required for the correct positioning of the cellular division plane by delimiting the actomyosin ring assembly at the cell equator. The polypeptide is Protein yop1 (yop1) (Schizosaccharomyces pombe (strain 972 / ATCC 24843) (Fission yeast)).